Reading from the N-terminus, the 393-residue chain is Glutamate 5-kinase 1 (393 aa).

Residue Lys-17 participates in ATP binding. Residues Ser-57, Asp-144, and Asn-156 each coordinate substrate. 176–177 contacts ATP; it reads SD. One can recognise a PUA domain in the interval 282–359; it reads AGSLSIDAGA…AEIAAILGYA (78 aa).

The protein belongs to the glutamate 5-kinase family.

The protein resides in the cytoplasm. It catalyses the reaction L-glutamate + ATP = L-glutamyl 5-phosphate + ADP. It participates in amino-acid biosynthesis; L-proline biosynthesis; L-glutamate 5-semialdehyde from L-glutamate: step 1/2. Functionally, catalyzes the transfer of a phosphate group to glutamate to form L-glutamate 5-phosphate. This Rhizobium meliloti (strain 1021) (Ensifer meliloti) protein is Glutamate 5-kinase 1.